A 150-amino-acid polypeptide reads, in one-letter code: Arginine repressor (150 aa).

It belongs to the ArgR family.

The protein localises to the cytoplasm. The protein operates within amino-acid biosynthesis; L-arginine biosynthesis [regulation]. Regulates arginine biosynthesis genes. The polypeptide is Arginine repressor (Clostridium botulinum (strain 657 / Type Ba4)).